We begin with the raw amino-acid sequence, 1666 residues long: Cortactin-binding protein 2 (1666 aa).

Disordered stretches follow at residues 1–25, 202–224, 366–411, 457–481, and 501–619; these read MATD…APAE, EKKR…AEME, IVSS…PAIQ, NANN…SPTS, and RFTS…PKPS. A coiled-coil region spans residues 120–274; the sequence is KMQERMSTQL…MTEQLKRGND (155 aa). Low complexity-rich tracts occupy residues 385 to 398 and 457 to 468; these read GPST…PSST and NANNDQDQNGNN. Polar residues predominate over residues 469 to 481; that stretch reads TQSPPSRDVSPTS. Arg501 is subject to Asymmetric dimethylarginine. ANK repeat units follow at residues 712 to 742, 746 to 775, 779 to 808, 812 to 841, 845 to 874, and 915 to 945; these read GRPT…DINH, DGHS…QVNA, DGFT…NINH, EGQT…DRSV, DGWT…PACG, and EGWT…EPER. Residue Ser1527 is modified to Phosphoserine. Positions 1545-1566 are enriched in basic and acidic residues; that stretch reads SESDISKIADTRDDLRRFDSSR. Disordered stretches follow at residues 1545–1601 and 1620–1666; these read SESD…RSNR and RSKI…KPNQ. Positions 1585-1594 are enriched in polar residues; sequence KEVSPLSSHQ. Residues 1627–1641 show a composition bias toward low complexity; the sequence is SQNTKRSSSSSNTRQ. A compositionally biased stretch (basic and acidic residues) spans 1648–1666; it reads SKDEIWNLRNNEQIEKPNQ.

Interacts with CTTN/cortactin SH3 domain. Interacts with STRN, STRN4/zinedin and MOB4/phocein; this interactions mediate the association with the STRIPAK core complex and may regulate dendritic spine distribution of the STRIPAK complex in hippocampal neurons. Activation of glutamate receptors weakens the interaction with STRN and STRN4.

It localises to the cytoplasm. The protein resides in the cell cortex. The protein localises to the cell projection. It is found in the dendritic spine. Functionally, regulates the dendritic spine distribution of CTTN/cortactin in hippocampal neurons, and thus controls dendritic spinogenesis and dendritic spine maintenance. Associates with the striatin-interacting phosphatase and kinase (STRIPAK) core complex to regulate dendritic spine distribution of the STRIPAK complex in hippocampal neurons. This Echinops telfairi (Lesser hedgehog tenrec) protein is Cortactin-binding protein 2 (CTTNBP2).